The sequence spans 239 residues: Probable plastid-lipid-associated protein 8, chloroplastic (239 aa).

The N-terminal 52 residues, 1–52 (MAATASSLTIASSFSEPRTQIHSSRRLNLPLQYSIPYKVLRSRSRRLGLVVS), are a transit peptide targeting the chloroplast. An N-acetylserine modification is found at Ser-53.

Belongs to the PAP/fibrillin family.

It localises to the plastid. The protein localises to the chloroplast. This Arabidopsis thaliana (Mouse-ear cress) protein is Probable plastid-lipid-associated protein 8, chloroplastic (PAP8).